We begin with the raw amino-acid sequence, 270 residues long: MLRKVFYISDGTAITAEVFGHAVLSQFPVEFEALTIPFVETESKANEVKAQINDCFITTGERPLVFHSIVKAEIRDIIYSSEGLDYDFLNTFVAPLEQQLGISATPVVHRTHGNMNESYEARIDAINYAMDNDDGQTLKHIDKADLVLLGVSRCGKTPSSLYLSMQFGIKAANYPFVEDDMDNLKLPDALKKNKSKLFGLTIDPVRLHEIRQSRMENSRYSSLRQCRIEVKEVEMMYKRERIPFVNTTNHSVEEIATKILAMTGLERHMF.

ADP is bound at residue 150 to 157 (GVSRCGKT).

The protein belongs to the pyruvate, phosphate/water dikinase regulatory protein family. PSRP subfamily.

The catalysed reaction is [pyruvate, water dikinase] + ADP = [pyruvate, water dikinase]-phosphate + AMP + H(+). The enzyme catalyses [pyruvate, water dikinase]-phosphate + phosphate + H(+) = [pyruvate, water dikinase] + diphosphate. Bifunctional serine/threonine kinase and phosphorylase involved in the regulation of the phosphoenolpyruvate synthase (PEPS) by catalyzing its phosphorylation/dephosphorylation. This is Putative phosphoenolpyruvate synthase regulatory protein from Shewanella woodyi (strain ATCC 51908 / MS32).